We begin with the raw amino-acid sequence, 371 residues long: MSSPIQTAIVQTSETSAARLPLRVDRSAPIPQVKSEHHVLVRVLAVALNPNDHKMVTHFNMPDSIAGCDFCGIVTESSSNGTSLSSSAGARLPVGTRVCGALFPYSPEDPDNGSFAQYCVVDARLLVRVPDSWSDLEAASLGVGWSTISLAFSDPNALGLEGLPTQPSHRAKEPVLVYGGGTASGTLACQLLNLMGYTPIAIASNQSSELAMKYGASATACYTSKDCVDTVKSLAGKPIRRILDCITDAESAAICYSAMARSSGTYACLEECPDACRTRRIIKVKEVMGFQVLGVDIKLGDSTYTRLGDQKLMAIGIQWANEIQALMESGQLKAHPLRELPGGWEAIIEGLEMLRNGEVRGQKLVVRIPQE.

51–54 (NDHK) provides a ligand contact to NADP(+). Residue 145–152 (WSTISLAF) participates in substrate binding. NADP(+)-binding positions include 181 to 184 (GTAS), 204 to 207 (SNQS), Y222, and 269 to 270 (LE). Position 289-293 (289-293 (GFQVL)) interacts with substrate. Residue 359 to 360 (VR) coordinates NADP(+).

This sequence belongs to the zinc-containing alcohol dehydrogenase family. As to quaternary structure, monomer.

It participates in secondary metabolite biosynthesis. Functionally, trans-enoyl reductase; part of the gene cluster that mediates the biosynthesis of calbistrin A and related compounds. Calbistrin A is a secondary metabolite with an interesting structure that was recently found to have bioactivity against leukemia cells. It consists of two polyketides linked by an ester bond: a bicyclic decalin containing polyketide and a linear 12 carbon dioic acid structure. The polyketide synthase calA is probably responsible for forming the decalin moiety. Because calA lacks a designated enoylreductase (ER) domain, the required activity is provided by the trans-enoyl reductase calK. Following release from the PKS, calF then probably catalyzes the oxidation and the subsequent Diels Alder cycloisomerization that lead to the formation of the decalin moiety. The decalin polyketide backbone includes two C-methyl groups, at C7 and C11 in backbone, of which the C7 position is probably methylated by the methyltransferase domain of calA. A candidate for adding the methyl group at C11, if not done by CalA, is the cluster methyltransferase calH. Several additional tailoring enzymes within the cluster could be involved in the modification of the decalin polyketide product. Those include the 3 cytochrome P450 monooxygenases CalE, CalG and CalL, of which one might be responsible for the introduction of the extra hydroxyl group attached to the backbone of the decalin moiety, at position C9 in the backbone, that allows for attachment of the linear moiety. One tailoring enzyme activity that is expected to be involved in biosynthesis of calbistrin is an acyltransferase for connecting the two polyketide synthase products, and which could be performed by the cluster acyltransferase calJ. The enzyme responsible for the biosynthesis of the linear moiety, probably a second PKS, has not been identified yet. This chain is Trans-enoyl reductase calK, found in Penicillium decumbens.